A 215-amino-acid chain; its full sequence is Myelin protein zero-like protein 2 (215 aa).

Positions 1-26 (MYGKSPTRAVLFLLGLQLTALWPTAA) are cleaved as a signal peptide. The region spanning 27–141 (VEIYTPRVLE…DGLIGEIQLS (115 aa)) is the Ig-like V-type domain. At 27–154 (VEIYTPRVLE…TVRFSEIHFL (128 aa)) the chain is on the extracellular side. Residues Asn39 and Asn118 are each glycosylated (N-linked (GlcNAc...) asparagine). A disulfide bond links Cys47 and Cys123. The chain crosses the membrane as a helical span at residues 155–175 (ALAIGSACALMVIIVIVVVLF). The Cytoplasmic portion of the chain corresponds to 176–215 (QHFRKKRRAERAHRVVEIKSKEEEKLNQEKKASVSLEYTD).

This sequence belongs to the myelin P0 protein family.

Its subcellular location is the membrane. In terms of biological role, mediates homophilic cell-cell adhesion. In Bos taurus (Bovine), this protein is Myelin protein zero-like protein 2 (MPZL2).